The primary structure comprises 176 residues: Xanthine-guanine phosphoribosyltransferase (176 aa).

Residues 51–52 (RG), arginine 88, and 111–119 (DDLVDSGKT) contribute to the 5-phospho-alpha-D-ribose 1-diphosphate site. Arginine 88 provides a ligand contact to GMP. Aspartate 112 provides a ligand contact to Mg(2+). Residues aspartate 115 and isoleucine 158 each coordinate guanine. Xanthine is bound by residues aspartate 115 and isoleucine 158. Residues 115-119 (DSGKT) and 157-158 (WI) contribute to the GMP site.

The protein belongs to the purine/pyrimidine phosphoribosyltransferase family. XGPT subfamily. Homotetramer. Mg(2+) is required as a cofactor.

It is found in the cell inner membrane. It carries out the reaction GMP + diphosphate = guanine + 5-phospho-alpha-D-ribose 1-diphosphate. The enzyme catalyses XMP + diphosphate = xanthine + 5-phospho-alpha-D-ribose 1-diphosphate. The catalysed reaction is IMP + diphosphate = hypoxanthine + 5-phospho-alpha-D-ribose 1-diphosphate. Its pathway is purine metabolism; GMP biosynthesis via salvage pathway; GMP from guanine: step 1/1. It functions in the pathway purine metabolism; XMP biosynthesis via salvage pathway; XMP from xanthine: step 1/1. Purine salvage pathway enzyme that catalyzes the transfer of the ribosyl-5-phosphate group from 5-phospho-alpha-D-ribose 1-diphosphate (PRPP) to the N9 position of the 6-oxopurines guanine and xanthine to form the corresponding ribonucleotides GMP (guanosine 5'-monophosphate) and XMP (xanthosine 5'-monophosphate), with the release of PPi. To a lesser extent, also acts on hypoxanthine. This chain is Xanthine-guanine phosphoribosyltransferase, found in Roseobacter denitrificans (strain ATCC 33942 / OCh 114) (Erythrobacter sp. (strain OCh 114)).